The chain runs to 442 residues: G-protein coupled receptor family C group 5 member C (442 aa).

The N-terminal stretch at methionine 1 to alanine 23 is a signal peptide. At glutamine 24–glycine 50 the chain is on the extracellular side. Residues isoleucine 51–leucine 71 traverse the membrane as a helical segment. Over valine 72–serine 85 the chain is Cytoplasmic. The helical transmembrane segment at leucine 86–alanine 106 threads the bilayer. The Extracellular portion of the chain corresponds to cysteine 107 to arginine 120. A helical membrane pass occupies residues phenylalanine 121–leucine 141. At histidine 142–valine 155 the chain is on the cytoplasmic side. A helical membrane pass occupies residues isoleucine 156–isoleucine 176. Residues isoleucine 177 to aspartate 209 lie on the Extracellular side of the membrane. Asparagine 192 is a glycosylation site (N-linked (GlcNAc...) asparagine). Residues phenylalanine 210–serine 230 form a helical membrane-spanning segment. Residues alanine 231–histidine 242 are Cytoplasmic-facing. Residues glycine 243–methionine 263 form a helical membrane-spanning segment. Topologically, residues tyrosine 264–threonine 280 are extracellular. A helical transmembrane segment spans residues leucine 281–valine 301. Over serine 302–aspartate 442 the chain is Cytoplasmic. 4 positions are modified to phosphoserine: serine 345, serine 384, serine 404, and serine 407. Phosphotyrosine is present on tyrosine 415. A Phosphothreonine modification is found at threonine 424.

The protein belongs to the G-protein coupled receptor 3 family.

It localises to the cell membrane. In terms of biological role, this retinoic acid-inducible G-protein coupled receptor provide evidence for a possible interaction between retinoid and G-protein signaling pathways. This is G-protein coupled receptor family C group 5 member C (GPRC5C) from Bos taurus (Bovine).